A 398-amino-acid polypeptide reads, in one-letter code: 1-deoxy-D-xylulose 5-phosphate reductoisomerase (398 aa).

NADPH-binding residues include T10, G11, S12, I13, G36, N38, and N124. Residue K125 coordinates 1-deoxy-D-xylulose 5-phosphate. E126 is an NADPH binding site. D150 contacts Mn(2+). Positions 151, 152, 176, and 199 each coordinate 1-deoxy-D-xylulose 5-phosphate. E152 contacts Mn(2+). G205 contributes to the NADPH binding site. 1-deoxy-D-xylulose 5-phosphate is bound by residues S212, N217, K218, and E221. Residue E221 coordinates Mn(2+).

Belongs to the DXR family. Mg(2+) is required as a cofactor. Mn(2+) serves as cofactor.

It carries out the reaction 2-C-methyl-D-erythritol 4-phosphate + NADP(+) = 1-deoxy-D-xylulose 5-phosphate + NADPH + H(+). Its pathway is isoprenoid biosynthesis; isopentenyl diphosphate biosynthesis via DXP pathway; isopentenyl diphosphate from 1-deoxy-D-xylulose 5-phosphate: step 1/6. Its function is as follows. Catalyzes the NADPH-dependent rearrangement and reduction of 1-deoxy-D-xylulose-5-phosphate (DXP) to 2-C-methyl-D-erythritol 4-phosphate (MEP). This chain is 1-deoxy-D-xylulose 5-phosphate reductoisomerase, found in Nostoc punctiforme (strain ATCC 29133 / PCC 73102).